Consider the following 166-residue polypeptide: Deglycase PYRAB04690 (166 aa).

One can recognise a PfpI endopeptidase domain in the interval 1-166 (MRVLILSADQ…WMREFVKLLK (166 aa)). His-101 is an active-site residue.

This sequence belongs to the peptidase C56 family. In terms of assembly, homohexamer formed by a dimer of trimers that assemble into a hollow ring structure.

The protein resides in the cytoplasm. The catalysed reaction is N(omega)-(1-hydroxy-2-oxopropyl)-L-arginyl-[protein] + H2O = lactate + L-arginyl-[protein] + H(+). It carries out the reaction N(6)-(1-hydroxy-2-oxopropyl)-L-lysyl-[protein] + H2O = lactate + L-lysyl-[protein] + H(+). It catalyses the reaction S-(1-hydroxy-2-oxopropyl)-L-cysteinyl-[protein] + H2O = lactate + L-cysteinyl-[protein] + H(+). The enzyme catalyses N(omega)-(1-hydroxy-2-oxoethyl)-L-arginyl-[protein] + H2O = L-arginyl-[protein] + glycolate + H(+). The catalysed reaction is N(6)-(1-hydroxy-2-oxoethyl)-L-lysyl-[protein] + H2O = glycolate + L-lysyl-[protein] + H(+). It carries out the reaction S-(1-hydroxy-2-oxoethyl)-L-cysteinyl-[protein] + H2O = glycolate + L-cysteinyl-[protein] + H(+). In terms of biological role, deglycase that catalyzes the deglycation of the Maillard adducts formed between amino groups of proteins and reactive carbonyl groups of glyoxals. Thus, functions as a protein deglycase that repairs methylglyoxal- and glyoxal-glycated proteins, and releases repaired proteins and lactate or glycolate, respectively. Deglycates cysteine, arginine and lysine residues in proteins, and thus reactivates these proteins by reversing glycation by glyoxals. Acts on early glycation intermediates (hemithioacetals and aminocarbinols), preventing the formation of advanced glycation endproducts (AGE) that cause irreversible damage. Also displays proteolytic activity. The polypeptide is Deglycase PYRAB04690 (Pyrococcus abyssi (strain GE5 / Orsay)).